Consider the following 129-residue polypeptide: Glycine cleavage system H protein (129 aa).

Residues 23–104 (SVTVGITHHA…AYTAWLFKIK (82 aa)) enclose the Lipoyl-binding domain. Position 64 is an N6-lipoyllysine (Lys-64).

Belongs to the GcvH family. As to quaternary structure, the glycine cleavage system is composed of four proteins: P, T, L and H. It depends on (R)-lipoate as a cofactor.

Functionally, the glycine cleavage system catalyzes the degradation of glycine. The H protein shuttles the methylamine group of glycine from the P protein to the T protein. The protein is Glycine cleavage system H protein of Thiobacillus denitrificans (strain ATCC 25259 / T1).